Reading from the N-terminus, the 356-residue chain is Probable methyltransferase-like protein 15 homolog (356 aa).

S-adenosyl-L-methionine contacts are provided by residues 55 to 57 (GGH), D74, F103, D126, and Q133.

It belongs to the methyltransferase superfamily. RsmH family.

Its function is as follows. Probable S-adenosyl-L-methionine-dependent methyltransferase. The protein is Probable methyltransferase-like protein 15 homolog of Drosophila melanogaster (Fruit fly).